The primary structure comprises 186 residues: NADH-ubiquinone oxidoreductase 17.8 kDa subunit, mitochondrial (186 aa).

Residues 1–26 constitute a mitochondrion transit peptide; that stretch reads MSSFRLGVSRVARQVRAPCVRNTRRY. The segment at 22 to 49 is disordered; that stretch reads NTRRYASDSHAPADHTHSAAGHGEHHHA. Residues 26 to 49 are compositionally biased toward basic and acidic residues; it reads YASDSHAPADHTHSAAGHGEHHHA. A helical transmembrane segment spans residues 58–78; the sequence is LGTAFYVIFGAIPAFGALYYF.

Complex I is composed of about 40 different subunits.

Its subcellular location is the mitochondrion inner membrane. The enzyme catalyses a ubiquinone + NADH + 5 H(+)(in) = a ubiquinol + NAD(+) + 4 H(+)(out). In terms of biological role, transfer of electrons from NADH to the respiratory chain. The immediate electron acceptor for the enzyme is believed to be ubiquinone. The sequence is that of NADH-ubiquinone oxidoreductase 17.8 kDa subunit, mitochondrial (nuo17.8) from Neurospora crassa (strain ATCC 24698 / 74-OR23-1A / CBS 708.71 / DSM 1257 / FGSC 987).